Consider the following 166-residue polypeptide: NAD(P)H-quinone oxidoreductase subunit I, chloroplastic (166 aa).

4Fe-4S ferredoxin-type domains are found at residues 55-84 (GRIH…VDWK) and 95-124 (LNYS…MTEE). Residues cysteine 64, cysteine 67, cysteine 70, cysteine 74, cysteine 104, cysteine 107, cysteine 110, and cysteine 114 each coordinate [4Fe-4S] cluster.

The protein belongs to the complex I 23 kDa subunit family. NDH is composed of at least 16 different subunits, 5 of which are encoded in the nucleus. It depends on [4Fe-4S] cluster as a cofactor.

It is found in the plastid. The protein resides in the chloroplast thylakoid membrane. The catalysed reaction is a plastoquinone + NADH + (n+1) H(+)(in) = a plastoquinol + NAD(+) + n H(+)(out). It carries out the reaction a plastoquinone + NADPH + (n+1) H(+)(in) = a plastoquinol + NADP(+) + n H(+)(out). Functionally, NDH shuttles electrons from NAD(P)H:plastoquinone, via FMN and iron-sulfur (Fe-S) centers, to quinones in the photosynthetic chain and possibly in a chloroplast respiratory chain. The immediate electron acceptor for the enzyme in this species is believed to be plastoquinone. Couples the redox reaction to proton translocation, and thus conserves the redox energy in a proton gradient. This Polymnia canadensis (White-flowered leaf-cup) protein is NAD(P)H-quinone oxidoreductase subunit I, chloroplastic.